Reading from the N-terminus, the 198-residue chain is uncharacterized protein (198 aa).

The segment at 51–74 is disordered; sequence EEPDNGDDRGSRRTTGQGRKWAAH.

This is an uncharacterized protein from Homo sapiens (Human).